A 751-amino-acid polypeptide reads, in one-letter code: 1,3-beta-galactosyl-N-acetylhexosamine phosphorylase (751 aa).

Asp313 acts as the Proton donor in catalysis.

The protein belongs to the glycoside hydrolase 112 family. In terms of assembly, homodimer.

It carries out the reaction beta-D-galactosyl-(1-&gt;3)-N-acetyl-D-glucosamine + phosphate = alpha-D-galactose 1-phosphate + N-acetyl-D-glucosamine. In terms of biological role, reversibly phosphorolyzes lacto-N-biose to Gal1-P and N-acetylglucosamine (GlcNAc) and galacto-N-biose to Gal1-P and N-acetylgalactosamine (GalNAc). Involved in the lacto-N-biose I/galacto-N-biose (LNB/GNB) degradation pathway, which is important for host intestinal colonization by bifidobacteria. The protein is 1,3-beta-galactosyl-N-acetylhexosamine phosphorylase (lnpA) of Bifidobacterium longum subsp. longum (strain ATCC 15707 / DSM 20219 / JCM 1217 / NCTC 11818 / E194b).